We begin with the raw amino-acid sequence, 240 residues long: Probable septum site-determining protein MinC (240 aa).

Belongs to the MinC family. As to quaternary structure, interacts with MinD and FtsZ.

In terms of biological role, cell division inhibitor that blocks the formation of polar Z ring septums. Rapidly oscillates between the poles of the cell to destabilize FtsZ filaments that have formed before they mature into polar Z rings. Prevents FtsZ polymerization. This Aeromonas hydrophila subsp. hydrophila (strain ATCC 7966 / DSM 30187 / BCRC 13018 / CCUG 14551 / JCM 1027 / KCTC 2358 / NCIMB 9240 / NCTC 8049) protein is Probable septum site-determining protein MinC.